A 549-amino-acid polypeptide reads, in one-letter code: uncharacterized protein (549 aa).

This is an uncharacterized protein from Methanocaldococcus jannaschii (strain ATCC 43067 / DSM 2661 / JAL-1 / JCM 10045 / NBRC 100440) (Methanococcus jannaschii).